Here is a 396-residue protein sequence, read N- to C-terminus: Protein BOP3 (396 aa).

Disordered regions lie at residues 1 to 22, 98 to 126, 145 to 168, 203 to 239, 254 to 274, and 355 to 396; these read MSTF…NNVN, GVPA…ENLP, PTPM…GISH, VARR…KFTN, RDQQ…QQDL, and REGR…LNST. 3 stretches are compositionally biased toward polar residues: residues 111 to 124, 159 to 168, and 210 to 230; these read QPHN…SSEN, ASSSTGGISH, and GTKS…SRNL. The segment covering 355 to 369 has biased composition (basic and acidic residues); sequence REGRQVHDDLDDRTC. Residues 370-396 show a composition bias toward polar residues; sequence SESSSRNESPVRTITKDNSVGKILNST.

It is found in the cytoplasm. It localises to the nucleus. Involved in resistance to methylmercury. Overexpression suppresses a PAM1-SLV3 double null mutation. The protein is Protein BOP3 (BOP3) of Saccharomyces cerevisiae (strain ATCC 204508 / S288c) (Baker's yeast).